Reading from the N-terminus, the 492-residue chain is uncharacterized protein (492 aa).

A helical transmembrane segment spans residues 30–46 (YVCLSVAVAAVGYANYM). The 67-residue stretch at 144-210 (NYYDVLNVNE…IRKNIYDNEG (67 aa)) folds into the J domain.

The protein resides in the membrane. This is an uncharacterized protein from Plasmodium falciparum (isolate 3D7).